The primary structure comprises 407 residues: MKLAFICTEKLPAPAVRGGAIQMMIDGVTPYFSSRYDLTIFSIEDPSLPKRETKDGVHYIHLPKEHYREAVAEELRASSFDLIHVFNRPLNVSLYKKASPNSKIVLSLHNEMFSEKKMTFAQGKEVLDNVSMITTVSEFIKQTVIERFPEAEDITKVVYSGVDLNSYPPVWTMKGSAVRKTYRKKYGIEDKKVILFAGRLSPTKGPHLLIHSMRRILQQHPDAVLVIAGGKWFSDDSENQYVTYLRTLALPYRDHIIFTKFIPADDIPNLFLMADVFVCSSQWNEPLARVNYEAMAAGTPLITTNRGGNGEVVKHEVTGLVIDSYNKPSSFAKAIDRAFTDQELMNKMTKNARKHVEALFTFTHAAKRLNTVYQSVLTPKNKQFPPPFLTQNFDLSSINQLFVKAKT.

It belongs to the glycosyltransferase group 1 family. Glycosyltransferase 4 subfamily.

The polypeptide is Putative glycosyltransferase YtcC (ytcC) (Bacillus subtilis (strain 168)).